The sequence spans 36 residues: Cytochrome b6-f complex subunit 7 (36 aa).

A helical membrane pass occupies residues 5–25 (IFFVAGLVFVLTLVGMAIGFG).

Belongs to the PetM family. In terms of assembly, the 4 large subunits of the cytochrome b6-f complex are cytochrome b6, subunit IV (17 kDa polypeptide, PetD), cytochrome f and the Rieske protein, while the 4 small subunits are PetG, PetL, PetM and PetN. The complex functions as a dimer.

It is found in the cell inner membrane. In terms of biological role, component of the cytochrome b6-f complex, which mediates electron transfer between photosystem II (PSII) and photosystem I (PSI), cyclic electron flow around PSI, and state transitions. This chain is Cytochrome b6-f complex subunit 7, found in Gloeobacter violaceus (strain ATCC 29082 / PCC 7421).